A 373-amino-acid polypeptide reads, in one-letter code: Probable G-protein coupled receptor 173 (373 aa).

Residues 1–26 (MANTTGEPEEVSGALSLPSASAYVKL) are Extracellular-facing. The N-linked (GlcNAc...) asparagine glycan is linked to N3. The helical transmembrane segment at 27–47 (VLLGLIMCVSLAGNAILSLLV) threads the bilayer. At 48-59 (LKERALHKAPYY) the chain is on the cytoplasmic side. Residues 60–80 (FLLDLCLADGIRSAICFPFVL) form a helical membrane-spanning segment. Residues 81-97 (ASVRHGSSWTFSALSCK) lie on the Extracellular side of the membrane. A disulfide bridge links C96 with C174. A helical membrane pass occupies residues 98–118 (IVAFMAVLFCFHAAFMLFCIS). The Cytoplasmic portion of the chain corresponds to 119–139 (VTRYMAIAHHRFYAKRMTLWT). A helical membrane pass occupies residues 140–160 (CAAVICMAWTLSVAMAFPPVF). Residues 161 to 188 (DVGTYKFIREEDQCIFEHRYFKANDTLG) lie on the Extracellular side of the membrane. Residue N184 is glycosylated (N-linked (GlcNAc...) asparagine). The helical transmembrane segment at 189-209 (FMLMLAVLMAATHAVYGKLLL) threads the bilayer. Residues 210 to 287 (FEYRHRKMKP…VKGEKQLGRM (78 aa)) lie on the Cytoplasmic side of the membrane. The helical transmembrane segment at 288 to 308 (FYAITLLFLLLWSPYIVACYW) threads the bilayer. Topologically, residues 309–322 (RVFVKACAVPHRYL) are extracellular. Residues 323 to 343 (ATAVWMSFAQAAVNPIVCFLL) form a helical membrane-spanning segment. The Cytoplasmic portion of the chain corresponds to 344–373 (NKDLKKCLRTHAPCWGTGGAPAPREPYCVM).

This sequence belongs to the G-protein coupled receptor 1 family. In terms of tissue distribution, expressed in the ovary, specifically in granulosa cells of follicles that have passed the primary stage and in oocytes (at protein level). Expressed in preadipocytes.

It localises to the cell membrane. In terms of biological role, is a receptor for the SMIM20 derived peptides Phoenixin-14 and Phoenixin-20. It mediates the Phoenixin-14 and Phoenixin-20 augmentation of gonadotropin-releasing hormone (GNRH) signaling in the hypothalamus and pituitary gland. In the ovary, it mediates the effects of Phoenixin-14 and Phoenixin-20 induced granulosa cell proliferation during follicular growth. This Mus musculus (Mouse) protein is Probable G-protein coupled receptor 173 (Gpr173).